The primary structure comprises 248 residues: UPF0736 protein BC_1176 (248 aa).

Belongs to the UPF0736 family.

This Bacillus cereus (strain ATCC 14579 / DSM 31 / CCUG 7414 / JCM 2152 / NBRC 15305 / NCIMB 9373 / NCTC 2599 / NRRL B-3711) protein is UPF0736 protein BC_1176.